Here is a 335-residue protein sequence, read N- to C-terminus: Phospho-N-acetylmuramoyl-pentapeptide-transferase (335 aa).

The next 10 membrane-spanning stretches (helical) occupy residues 3–23 (LTIL…PHFI), 53–73 (GGTV…LVYF), 78–98 (SLGL…IGFL), 118–138 (FTLQ…PSGI), 143–163 (VFGY…FWVV), 174–194 (GIDG…GVIA), 200–220 (FDVL…FLFN), 226–246 (IFMG…ISIA), 251–271 (WTLL…MLQV), and 314–334 (VDAF…AILY).

This sequence belongs to the glycosyltransferase 4 family. MraY subfamily. Mg(2+) is required as a cofactor.

It is found in the cell membrane. It carries out the reaction UDP-N-acetyl-alpha-D-muramoyl-L-alanyl-gamma-D-glutamyl-L-lysyl-D-alanyl-D-alanine + di-trans,octa-cis-undecaprenyl phosphate = Mur2Ac(oyl-L-Ala-gamma-D-Glu-L-Lys-D-Ala-D-Ala)-di-trans,octa-cis-undecaprenyl diphosphate + UMP. The protein operates within cell wall biogenesis; peptidoglycan biosynthesis. Catalyzes the initial step of the lipid cycle reactions in the biosynthesis of the cell wall peptidoglycan: transfers peptidoglycan precursor phospho-MurNAc-pentapeptide from UDP-MurNAc-pentapeptide onto the lipid carrier undecaprenyl phosphate, yielding undecaprenyl-pyrophosphoryl-MurNAc-pentapeptide, known as lipid I. The polypeptide is Phospho-N-acetylmuramoyl-pentapeptide-transferase (Streptococcus equi subsp. zooepidemicus (strain MGCS10565)).